The following is a 219-amino-acid chain: Chloramphenicol acetyltransferase (219 aa).

His-190 serves as the catalytic Proton acceptor.

This sequence belongs to the chloramphenicol acetyltransferase family. As to quaternary structure, homotrimer.

It catalyses the reaction chloramphenicol + acetyl-CoA = chloramphenicol 3-acetate + CoA. Its function is as follows. This enzyme is an effector of chloramphenicol resistance in bacteria. The sequence is that of Chloramphenicol acetyltransferase (catB) from Clostridium butyricum.